The chain runs to 532 residues: Zinc finger protein 350 (532 aa).

Residues 8–79 (ITLEDVAVDF…EDGIHSGACS (72 aa)) form the KRAB domain. 8 C2H2-type zinc fingers span residues 206–228 (HVCS…QVMH), 234–256 (HRCS…QRTH), 262–284 (YECP…QKTH), 290–312 (YICS…QRIH), 318–340 (YICN…QRFH), 346–368 (FVCS…QRIH), 374–396 (FECS…QRTH), and 402–424 (YGCN…KRIH). A compositionally biased stretch (basic and acidic residues) spans 427-443 (EKQEAAKVENPPAERHS). Residues 427–465 (EKQEAAKVENPPAERHSSLHTSDVMQEKNSANGATTQVP) form a disordered region. The span at 445-465 (LHTSDVMQEKNSANGATTQVP) shows a compositional bias: polar residues.

This sequence belongs to the krueppel C2H2-type zinc-finger protein family. As to quaternary structure, interacts with BRCA1. Interacts with RNF11. As to expression, widely expressed.

Its subcellular location is the nucleus. The protein resides in the nucleus matrix. Transcriptional repressor. Binds to a specific sequence, 5'-GGGxxxCAGxxxTTT-3', within GADD45 intron 3. The chain is Zinc finger protein 350 (ZNF350) from Homo sapiens (Human).